A 333-amino-acid polypeptide reads, in one-letter code: Low specificity L-threonine aldolase (333 aa).

N6-(pyridoxal phosphate)lysine is present on lysine 197.

It belongs to the threonine aldolase family. Homotetramer. Requires pyridoxal 5'-phosphate as cofactor.

The enzyme catalyses L-threonine = acetaldehyde + glycine. It catalyses the reaction L-allo-threonine = acetaldehyde + glycine. Catalyzes the cleavage of L-allo-threonine and L-threonine to glycine and acetaldehyde. L-threo-phenylserine and L-erythro-phenylserine are also good substrates. In Escherichia coli O157:H7, this protein is Low specificity L-threonine aldolase (ltaE).